Here is a 378-residue protein sequence, read N- to C-terminus: Succinyl-diaminopimelate desuccinylase (378 aa).

H68 is a binding site for Zn(2+). Residue D70 is part of the active site. Zn(2+) is bound at residue D102. The active-site Proton acceptor is E136. E137, E165, and H351 together coordinate Zn(2+).

The protein belongs to the peptidase M20A family. DapE subfamily. In terms of assembly, homodimer. The cofactor is Zn(2+). Co(2+) is required as a cofactor.

The enzyme catalyses N-succinyl-(2S,6S)-2,6-diaminopimelate + H2O = (2S,6S)-2,6-diaminopimelate + succinate. It participates in amino-acid biosynthesis; L-lysine biosynthesis via DAP pathway; LL-2,6-diaminopimelate from (S)-tetrahydrodipicolinate (succinylase route): step 3/3. Functionally, catalyzes the hydrolysis of N-succinyl-L,L-diaminopimelic acid (SDAP), forming succinate and LL-2,6-diaminopimelate (DAP), an intermediate involved in the bacterial biosynthesis of lysine and meso-diaminopimelic acid, an essential component of bacterial cell walls. In Pseudomonas syringae pv. syringae, this protein is Succinyl-diaminopimelate desuccinylase.